Reading from the N-terminus, the 212-residue chain is Eukaryotic translation initiation factor 4E-1 (212 aa).

Residues Cys125 and Cys129 are joined by a disulfide bond.

It belongs to the eukaryotic initiation factor 4E family. In terms of assembly, EIF4F is a multi-subunit complex, the composition of which varies with external and internal environmental conditions. It is composed of at least EIF4A, EIF4E and EIF4G. EIF4E is also known to interact with other partners, including pgl-1. Interacts with ifet-1. Enriched in the germline from L3 larvae to adults; regions of the gonad undergoing spermatogenesis. Expressed in germ granules (P granules); when associated with pgl-1.

It is found in the cytoplasm. Its function is as follows. Recognizes and binds the 7-methylguanosine-containing mRNA cap during an early step in the initiation of protein synthesis and facilitates ribosome binding by inducing the unwinding of the mRNAs secondary structures. All 5 eIF4E proteins bind monomethyl cap structures. Only ife-1, ife-2 and ife-5 bind trimethyl cap structures which result from trans-splicing. Translation of trimethyl cap structure mRNAs may be regulated by intracellular redox state; disulfide bonds change the width and depth of the cap-binding cavity determining selectivity to mRNA caps. Required for progression through meiotic divisions during spermatogenesis and for the production of viable sperm. It is not required during oogenesis. This chain is Eukaryotic translation initiation factor 4E-1 (ife-1), found in Caenorhabditis elegans.